Reading from the N-terminus, the 1019-residue chain is UPF0182 protein Tery_0938 (1019 aa).

The next 9 helical transmembrane spans lie at 23 to 43 (IHILIILFFSFVCWEILGFST), 67 to 87 (TETWLWITTFLISMGFFLVNL), 128 to 148 (LSLSWLLCCIFGLILLVGLIL), 192 to 212 (LWLLGLFLLLSFAIIINPILW), 213 to 233 (LSVFAVVLSLVFSFILSSHWA), 270 to 290 (FWLIGLFLYGFVACILIYLLS), 313 to 333 (LGGGFILTIAFSYFIACFELL), 355 to 375 (YVFLGILALLIAFFLFWQAIF), and 416 to 436 (AILTWYLIIAVIAGWLIPKIV).

The protein belongs to the UPF0182 family.

Its subcellular location is the cell membrane. In Trichodesmium erythraeum (strain IMS101), this protein is UPF0182 protein Tery_0938.